The primary structure comprises 82 residues: Acyl carrier protein (82 aa).

One can recognise a Carrier domain in the interval 4–79; it reads EKIFQELKNI…DVVDIIESNL (76 aa). Ser-39 bears the O-(pantetheine 4'-phosphoryl)serine mark.

The protein belongs to the acyl carrier protein (ACP) family. In terms of processing, 4'-phosphopantetheine is transferred from CoA to a specific serine of apo-ACP by AcpS. This modification is essential for activity because fatty acids are bound in thioester linkage to the sulfhydryl of the prosthetic group.

The protein localises to the cytoplasm. The protein operates within lipid metabolism; fatty acid biosynthesis. Functionally, carrier of the growing fatty acid chain in fatty acid biosynthesis. This Coprothermobacter proteolyticus (strain ATCC 35245 / DSM 5265 / OCM 4 / BT) protein is Acyl carrier protein.